The primary structure comprises 255 residues: Histidine transport ATP-binding protein HisP (255 aa).

Positions 4–250 constitute an ABC transporter domain; sequence LQVEDIHKRY…PRSERLRQFL (247 aa). 6 residues coordinate ATP: S38, G39, G41, K42, S43, and T44.

The protein belongs to the ABC transporter superfamily. As to quaternary structure, the HisPMQJ complex is composed of two ATP-binding proteins (HisP), two transmembrane proteins (HisM and HisQ) and a solute-binding protein (HisJ).

The protein resides in the cell inner membrane. It catalyses the reaction a polar amino acid(out) + ATP + H2O = a polar amino acid(in) + ADP + phosphate + H(+). The catalysed reaction is L-histidine(out) + ATP + H2O = L-histidine(in) + ADP + phosphate + H(+). Part of the ABC transporter complex HisPMQJ involved in histidine transport. Shows ATPase activity. Responsible for energy coupling to the transport system. This chain is Histidine transport ATP-binding protein HisP (hisP), found in Pseudomonas aeruginosa (strain ATCC 15692 / DSM 22644 / CIP 104116 / JCM 14847 / LMG 12228 / 1C / PRS 101 / PAO1).